Consider the following 390-residue polypeptide: ATP-sensitive inward rectifier potassium channel 11 (390 aa).

Residues 1-65 (MLSRKGIIPE…LQDVFTTLVD (65 aa)) lie on the Cytoplasmic side of the membrane. ATP contacts are provided by N48 and R50. Residues 66 to 92 (LKWPHTLLIFTMSFLCSWLLFAMVWWL) traverse the membrane as a helical segment. At 93–116 (IAFAHGDLAPGEGTNVPCVTSIHS) the chain is on the extracellular side. An intrachain disulfide couples C110 to C142. Residues 117–133 (FSSAFLFSIEVQVTIGF) constitute an intramembrane region (discontinuously helical; Pore-forming). K(+) is bound by residues T130 and F133. The Selectivity filter motif lies at 130-135 (TIGFGG). Residues 134-142 (GGRMVTEEC) lie on the Extracellular side of the membrane. The chain crosses the membrane as a helical span at residues 143 to 171 (PLAILILIVQNIVGLMINAIMLGCIFMKT). The Cytoplasmic portion of the chain corresponds to 172–390 (AQAHRRAETL…KFSISPDSLS (219 aa)). R176 serves as a coordination point for a 1,2-diacyl-sn-glycero-3-phospho-(1D-myo-inositol-4,5-bisphosphate). Y330 provides a ligand contact to ATP. At T341 the chain carries Phosphothreonine; by MAPK1. A Phosphoserine; by MAPK1 modification is found at S385.

Belongs to the inward rectifier-type potassium channel (TC 1.A.2.1) family. KCNJ11 subfamily. As to quaternary structure, homotetramer; the homotetramer binds four ATP molecules (one ATP per subunit). Forms an heterooctamer with ABCC8/SUR1; one KCNJ11 homotetramer interacts with four ABCC8/SUR1 molecules. Interacts with ABCC9/SUR2. In terms of processing, phosphorylation by MAPK1 results in changes in channel gating that destabilize the closed states and reduce the ATP sensitivity.

It localises to the membrane. It catalyses the reaction K(+)(in) = K(+)(out). With respect to regulation, KATP channels are regulated by cytoplasmic ATP/ADP ratios; ATP inhibits the channel by closing the pore, while ADP activates the channel. Activated by phosphatidylinositol 4,5-biphosphate (PtdIns(4,5)P2). In terms of biological role, inward rectifier potassium channel that forms the pore of ATP-sensitive potassium channels (KATP), regulating potassium permeability as a function of cytoplasmic ATP and ADP concentrations in many different cells. Inward rectifier potassium channels are characterized by a greater tendency to allow potassium to flow into the cell rather than out of it. Their voltage dependence is regulated by the concentration of extracellular potassium; as external potassium is raised, the voltage range of the channel opening shifts to more positive voltages. The inward rectification is mainly due to the blockage of outward current by internal magnesium. Can be blocked by extracellular barium. In pancreatic cells, it forms KATP channels with ABCC8/SUR1. Can form cardiac and smooth muscle-type KATP channels with ABCC9. This Mus musculus (Mouse) protein is ATP-sensitive inward rectifier potassium channel 11 (Kcnj11).